The primary structure comprises 147 residues: Phosphoribosyl-AMP cyclohydrolase (147 aa).

A Mg(2+)-binding site is contributed by D89. C90 contacts Zn(2+). Mg(2+) is bound by residues D91 and D93. Zn(2+)-binding residues include C106 and C113.

The protein belongs to the PRA-CH family. As to quaternary structure, homodimer. Requires Mg(2+) as cofactor. The cofactor is Zn(2+).

It localises to the cytoplasm. The catalysed reaction is 1-(5-phospho-beta-D-ribosyl)-5'-AMP + H2O = 1-(5-phospho-beta-D-ribosyl)-5-[(5-phospho-beta-D-ribosylamino)methylideneamino]imidazole-4-carboxamide. The protein operates within amino-acid biosynthesis; L-histidine biosynthesis; L-histidine from 5-phospho-alpha-D-ribose 1-diphosphate: step 3/9. Its function is as follows. Catalyzes the hydrolysis of the adenine ring of phosphoribosyl-AMP. The protein is Phosphoribosyl-AMP cyclohydrolase of Nitrobacter hamburgensis (strain DSM 10229 / NCIMB 13809 / X14).